A 182-amino-acid chain; its full sequence is Ribosome-recycling factor (182 aa).

The protein belongs to the RRF family.

Its subcellular location is the cytoplasm. Functionally, responsible for the release of ribosomes from messenger RNA at the termination of protein biosynthesis. May increase the efficiency of translation by recycling ribosomes from one round of translation to another. This Parasynechococcus marenigrum (strain WH8102) protein is Ribosome-recycling factor.